Consider the following 211-residue polypeptide: Ribosomal RNA small subunit methyltransferase G (211 aa).

S-adenosyl-L-methionine is bound by residues Gly-79, Leu-84, 130-131 (VE), and Arg-145.

It belongs to the methyltransferase superfamily. RNA methyltransferase RsmG family.

It is found in the cytoplasm. The enzyme catalyses guanosine(527) in 16S rRNA + S-adenosyl-L-methionine = N(7)-methylguanosine(527) in 16S rRNA + S-adenosyl-L-homocysteine. Its function is as follows. Specifically methylates the N7 position of guanine in position 527 of 16S rRNA. The polypeptide is Ribosomal RNA small subunit methyltransferase G (Alteromonas mediterranea (strain DSM 17117 / CIP 110805 / LMG 28347 / Deep ecotype)).